The sequence spans 136 residues: DNA-directed RNA polymerase subunit omega (136 aa).

The segment covering serine 90–serine 102 has biased composition (low complexity). A disordered region spans residues serine 90 to glutamate 136. Basic and acidic residues predominate over residues serine 103–arginine 120.

It belongs to the RNA polymerase subunit omega family. The RNAP catalytic core consists of 2 alpha, 1 beta, 1 beta' and 1 omega subunit. When a sigma factor is associated with the core the holoenzyme is formed, which can initiate transcription.

The catalysed reaction is RNA(n) + a ribonucleoside 5'-triphosphate = RNA(n+1) + diphosphate. In terms of biological role, promotes RNA polymerase assembly. Latches the N- and C-terminal regions of the beta' subunit thereby facilitating its interaction with the beta and alpha subunits. This Methylorubrum populi (strain ATCC BAA-705 / NCIMB 13946 / BJ001) (Methylobacterium populi) protein is DNA-directed RNA polymerase subunit omega.